Consider the following 414-residue polypeptide: Tryptophan synthase beta chain (414 aa).

Residues 1–12 are compositionally biased toward basic and acidic residues; sequence MVSTISRHDQNK. Residues 1 to 23 are disordered; the sequence is MVSTISRHDQNKNNDYLNQPSKE. Lys-109 is subject to N6-(pyridoxal phosphate)lysine.

This sequence belongs to the TrpB family. As to quaternary structure, tetramer of two alpha and two beta chains. Pyridoxal 5'-phosphate is required as a cofactor.

It carries out the reaction (1S,2R)-1-C-(indol-3-yl)glycerol 3-phosphate + L-serine = D-glyceraldehyde 3-phosphate + L-tryptophan + H2O. It participates in amino-acid biosynthesis; L-tryptophan biosynthesis; L-tryptophan from chorismate: step 5/5. Functionally, the beta subunit is responsible for the synthesis of L-tryptophan from indole and L-serine. The polypeptide is Tryptophan synthase beta chain (Prochlorococcus marinus (strain MIT 9515)).